We begin with the raw amino-acid sequence, 227 residues long: Orotidine 5'-phosphate decarboxylase (227 aa).

Substrate is bound by residues D8, K30, D59–T68, T118, R178, Q187, G207, and R208. K61 functions as the Proton donor in the catalytic mechanism.

This sequence belongs to the OMP decarboxylase family. Type 1 subfamily. Homodimer.

The catalysed reaction is orotidine 5'-phosphate + H(+) = UMP + CO2. Its pathway is pyrimidine metabolism; UMP biosynthesis via de novo pathway; UMP from orotate: step 2/2. Functionally, catalyzes the decarboxylation of orotidine 5'-monophosphate (OMP) to uridine 5'-monophosphate (UMP). In Helicobacter pylori (strain P12), this protein is Orotidine 5'-phosphate decarboxylase.